The chain runs to 932 residues: 2-oxoglutarate dehydrogenase E1 component (932 aa).

Belongs to the alpha-ketoglutarate dehydrogenase family. Homodimer. Part of the 2-oxoglutarate dehydrogenase (OGDH) complex composed of E1 (2-oxoglutarate dehydrogenase), E2 (dihydrolipoamide succinyltransferase) and E3 (dihydrolipoamide dehydrogenase); the complex contains multiple copies of the three enzymatic components (E1, E2 and E3). The cofactor is thiamine diphosphate.

The catalysed reaction is N(6)-[(R)-lipoyl]-L-lysyl-[protein] + 2-oxoglutarate + H(+) = N(6)-[(R)-S(8)-succinyldihydrolipoyl]-L-lysyl-[protein] + CO2. E1 component of the 2-oxoglutarate dehydrogenase (OGDH) complex which catalyzes the decarboxylation of 2-oxoglutarate, the first step in the conversion of 2-oxoglutarate to succinyl-CoA and CO(2). This is 2-oxoglutarate dehydrogenase E1 component from Staphylococcus aureus (strain JH9).